A 426-amino-acid polypeptide reads, in one-letter code: Enolase (426 aa).

Residue Gln-163 participates in (2R)-2-phosphoglycerate binding. The active-site Proton donor is the Glu-205. Positions 242, 286, and 313 each coordinate Mg(2+). Residues Lys-338, Arg-367, Ser-368, and Lys-389 each coordinate (2R)-2-phosphoglycerate. The active-site Proton acceptor is Lys-338.

This sequence belongs to the enolase family. Mg(2+) is required as a cofactor.

Its subcellular location is the cytoplasm. The protein resides in the secreted. The protein localises to the cell surface. The enzyme catalyses (2R)-2-phosphoglycerate = phosphoenolpyruvate + H2O. The protein operates within carbohydrate degradation; glycolysis; pyruvate from D-glyceraldehyde 3-phosphate: step 4/5. Catalyzes the reversible conversion of 2-phosphoglycerate (2-PG) into phosphoenolpyruvate (PEP). It is essential for the degradation of carbohydrates via glycolysis. The chain is Enolase from Helicobacter pylori (strain J99 / ATCC 700824) (Campylobacter pylori J99).